The chain runs to 196 residues: Peptide deformylase (196 aa).

Positions 105 and 147 each coordinate Fe cation. E148 is an active-site residue. Position 151 (H151) interacts with Fe cation.

This sequence belongs to the polypeptide deformylase family. Fe(2+) serves as cofactor.

It carries out the reaction N-terminal N-formyl-L-methionyl-[peptide] + H2O = N-terminal L-methionyl-[peptide] + formate. Removes the formyl group from the N-terminal Met of newly synthesized proteins. Requires at least a dipeptide for an efficient rate of reaction. N-terminal L-methionine is a prerequisite for activity but the enzyme has broad specificity at other positions. The chain is Peptide deformylase from Christiangramia forsetii (strain DSM 17595 / CGMCC 1.15422 / KT0803) (Gramella forsetii).